The following is a 109-amino-acid chain: Class I hydrophobin dewE (109 aa).

Residues 1–20 form the signal peptide; it reads MKVATALSVLAVAGSALASA. Cystine bridges form between Cys34-Cys87, Cys40-Cys81, Cys41-Cys74, and Cys88-Cys102.

This sequence belongs to the fungal hydrophobin family. As to quaternary structure, self-assembles to form functional amyloid fibrils called rodlets. Self-assembly into fibrillar rodlets occurs spontaneously at hydrophobic:hydrophilic interfaces and the rodlets further associate laterally to form amphipathic monolayers.

It is found in the secreted. It localises to the spore wall. Functionally, aerial growth, conidiation, and dispersal of filamentous fungi in the environment rely upon a capability of their secreting small amphipathic proteins called hydrophobins (HPBs) with low sequence identity. Class I can self-assemble into an outermost layer of rodlet bundles on aerial cell surfaces, conferring cellular hydrophobicity that supports fungal growth, development and dispersal; whereas Class II form highly ordered films at water-air interfaces through intermolecular interactions but contribute nothing to the rodlet structure. DewE is a class I hydrophobin that contributes to the hydrophobicity of the spore surface. This is Class I hydrophobin dewE from Emericella nidulans (strain FGSC A4 / ATCC 38163 / CBS 112.46 / NRRL 194 / M139) (Aspergillus nidulans).